The following is a 418-amino-acid chain: Glutamate dehydrogenase (418 aa).

The active site involves K105. G217–Y223 contacts NAD(+).

It belongs to the Glu/Leu/Phe/Val dehydrogenases family. Homohexamer.

Its subcellular location is the cytoplasm. It catalyses the reaction L-glutamate + NAD(+) + H2O = 2-oxoglutarate + NH4(+) + NADH + H(+). The enzyme catalyses L-glutamate + NADP(+) + H2O = 2-oxoglutarate + NH4(+) + NADPH + H(+). The sequence is that of Glutamate dehydrogenase (gdhA) from Aeropyrum pernix (strain ATCC 700893 / DSM 11879 / JCM 9820 / NBRC 100138 / K1).